Here is a 136-residue protein sequence, read N- to C-terminus: NADPH-dependent 7-cyano-7-deazaguanine reductase (136 aa).

The Thioimide intermediate role is filled by Cys-50. Catalysis depends on Asp-57, which acts as the Proton donor. Substrate is bound by residues 72–74 (YEL) and 91–92 (HE).

It belongs to the GTP cyclohydrolase I family. QueF type 1 subfamily.

The protein localises to the cytoplasm. The enzyme catalyses 7-aminomethyl-7-carbaguanine + 2 NADP(+) = 7-cyano-7-deazaguanine + 2 NADPH + 3 H(+). Its pathway is tRNA modification; tRNA-queuosine biosynthesis. Catalyzes the NADPH-dependent reduction of 7-cyano-7-deazaguanine (preQ0) to 7-aminomethyl-7-deazaguanine (preQ1). This Prochlorococcus marinus (strain MIT 9515) protein is NADPH-dependent 7-cyano-7-deazaguanine reductase.